The primary structure comprises 921 residues: Protein translocase subunit SecA (921 aa).

ATP is bound by residues Gln85, 103-107 (GEGKT), and Asp514. Positions 905, 907, 916, and 917 each coordinate Zn(2+).

The protein belongs to the SecA family. In terms of assembly, monomer and homodimer. Part of the essential Sec protein translocation apparatus which comprises SecA, SecYEG and auxiliary proteins SecDF-YajC and YidC. It depends on Zn(2+) as a cofactor.

The protein resides in the cell inner membrane. It localises to the cytoplasm. It catalyses the reaction ATP + H2O + cellular proteinSide 1 = ADP + phosphate + cellular proteinSide 2.. In terms of biological role, part of the Sec protein translocase complex. Interacts with the SecYEG preprotein conducting channel. Has a central role in coupling the hydrolysis of ATP to the transfer of proteins into and across the cell membrane, serving both as a receptor for the preprotein-SecB complex and as an ATP-driven molecular motor driving the stepwise translocation of polypeptide chains across the membrane. The polypeptide is Protein translocase subunit SecA (Herminiimonas arsenicoxydans).